Consider the following 512-residue polypeptide: 2-isopropylmalate synthase (512 aa).

One can recognise a Pyruvate carboxyltransferase domain in the interval 5–268 (LIIFDTTLRD…DLNIDTTHIV (264 aa)). D14, H202, H204, and N239 together coordinate Mn(2+). The regulatory domain stretch occupies residues 394–512 (AFVSLSQHSE…SQAEKVAAQG (119 aa)).

Belongs to the alpha-IPM synthase/homocitrate synthase family. LeuA type 1 subfamily. In terms of assembly, homodimer. Mn(2+) is required as a cofactor.

Its subcellular location is the cytoplasm. It carries out the reaction 3-methyl-2-oxobutanoate + acetyl-CoA + H2O = (2S)-2-isopropylmalate + CoA + H(+). It functions in the pathway amino-acid biosynthesis; L-leucine biosynthesis; L-leucine from 3-methyl-2-oxobutanoate: step 1/4. In terms of biological role, catalyzes the condensation of the acetyl group of acetyl-CoA with 3-methyl-2-oxobutanoate (2-ketoisovalerate) to form 3-carboxy-3-hydroxy-4-methylpentanoate (2-isopropylmalate). The protein is 2-isopropylmalate synthase of Variovorax paradoxus (strain S110).